The primary structure comprises 255 residues: Putative esterase YitV (255 aa).

This Bacillus subtilis (strain 168) protein is Putative esterase YitV (yitV).